The following is a 153-amino-acid chain: Large ribosomal subunit protein uL22 (153 aa).

The disordered stretch occupies residues 125–153 (EPKEARQARKKAKSGRPAAAAKSETEKGA).

This sequence belongs to the universal ribosomal protein uL22 family. In terms of assembly, part of the 50S ribosomal subunit.

In terms of biological role, this protein binds specifically to 23S rRNA; its binding is stimulated by other ribosomal proteins, e.g. L4, L17, and L20. It is important during the early stages of 50S assembly. It makes multiple contacts with different domains of the 23S rRNA in the assembled 50S subunit and ribosome. The globular domain of the protein is located near the polypeptide exit tunnel on the outside of the subunit, while an extended beta-hairpin is found that lines the wall of the exit tunnel in the center of the 70S ribosome. This chain is Large ribosomal subunit protein uL22, found in Cutibacterium acnes (strain DSM 16379 / KPA171202) (Propionibacterium acnes).